The following is a 398-amino-acid chain: Succinate--CoA ligase [ADP-forming] subunit beta (398 aa).

The region spanning 9-254 (KAVLREFGVP…ESEEDAKEIE (246 aa)) is the ATP-grasp domain. Residues lysine 46, 53 to 55 (GRG), glutamate 109, serine 112, and glutamate 117 each bind ATP. Mg(2+) is bound by residues asparagine 209 and aspartate 223. Residues asparagine 274 and 331 to 333 (GIM) contribute to the substrate site.

The protein belongs to the succinate/malate CoA ligase beta subunit family. In terms of assembly, heterotetramer of two alpha and two beta subunits. Mg(2+) is required as a cofactor.

The catalysed reaction is succinate + ATP + CoA = succinyl-CoA + ADP + phosphate. The enzyme catalyses GTP + succinate + CoA = succinyl-CoA + GDP + phosphate. It functions in the pathway carbohydrate metabolism; tricarboxylic acid cycle; succinate from succinyl-CoA (ligase route): step 1/1. Functionally, succinyl-CoA synthetase functions in the citric acid cycle (TCA), coupling the hydrolysis of succinyl-CoA to the synthesis of either ATP or GTP and thus represents the only step of substrate-level phosphorylation in the TCA. The beta subunit provides nucleotide specificity of the enzyme and binds the substrate succinate, while the binding sites for coenzyme A and phosphate are found in the alpha subunit. The protein is Succinate--CoA ligase [ADP-forming] subunit beta of Rhodopseudomonas palustris (strain HaA2).